The chain runs to 325 residues: Lactonase drp35 (325 aa).

Positions 46, 108, 110, 128, 131, 133, 136, 183, 234, and 235 each coordinate Ca(2+). The active-site Proton donor is the D234.

It belongs to the SMP-30/CGR1 family. Requires Ca(2+) as cofactor.

The protein localises to the cytoplasm. Its function is as follows. Exhibits lactonase activity. Acts in cells with perturbed membrane integrity and is possibly related to the membrane homeostasis. The chain is Lactonase drp35 (drp35) from Staphylococcus haemolyticus (strain JCSC1435).